The sequence spans 72 residues: Exodeoxyribonuclease 7 small subunit (72 aa).

It belongs to the XseB family. Heterooligomer composed of large and small subunits.

Its subcellular location is the cytoplasm. It catalyses the reaction Exonucleolytic cleavage in either 5'- to 3'- or 3'- to 5'-direction to yield nucleoside 5'-phosphates.. Its function is as follows. Bidirectionally degrades single-stranded DNA into large acid-insoluble oligonucleotides, which are then degraded further into small acid-soluble oligonucleotides. This chain is Exodeoxyribonuclease 7 small subunit, found in Chlamydia trachomatis serovar A (strain ATCC VR-571B / DSM 19440 / HAR-13).